The sequence spans 363 residues: Probable butyrate kinase (363 aa).

Belongs to the acetokinase family.

Its subcellular location is the cytoplasm. It carries out the reaction butanoate + ATP = butanoyl phosphate + ADP. The chain is Probable butyrate kinase from Maridesulfovibrio salexigens (strain ATCC 14822 / DSM 2638 / NCIMB 8403 / VKM B-1763) (Desulfovibrio salexigens).